A 523-amino-acid polypeptide reads, in one-letter code: Glycine betaine transporter 1 (523 aa).

12 consecutive transmembrane segments (helical) span residues 33 to 53 (VFGI…VLDA), 71 to 91 (FDWL…ALIV), 109 to 129 (SFMS…LMFW), 165 to 185 (FHWG…LAFF), 214 to 234 (IVDI…LGLG), 251 to 271 (GLGL…VSVV), 286 to 306 (MVVA…ASLG), 337 to 357 (WTVF…MFIA), 372 to 392 (VLIV…GLAI), 420 to 440 (VLPF…VFFI), 467 to 487 (VFWA…GGSE), and 496 to 516 (AIST…SLLM).

This sequence belongs to the BCCT transporter (TC 2.A.15) family.

The protein localises to the cell inner membrane. Functionally, involved in the uptake of the osmoprotectant glycine betaine. In Vibrio parahaemolyticus serotype O3:K6 (strain RIMD 2210633), this protein is Glycine betaine transporter 1.